We begin with the raw amino-acid sequence, 488 residues long: N-succinylglutamate 5-semialdehyde dehydrogenase (488 aa).

An NAD(+)-binding site is contributed by 221 to 226; it reads GSSRTG. Catalysis depends on residues Glu-244 and Cys-278.

The protein belongs to the aldehyde dehydrogenase family. AstD subfamily.

It carries out the reaction N-succinyl-L-glutamate 5-semialdehyde + NAD(+) + H2O = N-succinyl-L-glutamate + NADH + 2 H(+). It participates in amino-acid degradation; L-arginine degradation via AST pathway; L-glutamate and succinate from L-arginine: step 4/5. In terms of biological role, catalyzes the NAD-dependent reduction of succinylglutamate semialdehyde into succinylglutamate. The protein is N-succinylglutamate 5-semialdehyde dehydrogenase of Pseudomonas syringae pv. syringae (strain B728a).